Here is an 81-residue protein sequence, read N- to C-terminus: Cortexin-2 (81 aa).

A helical transmembrane segment spans residues 29 to 49 (TAFAFVGMLLVFLGLLIVRCF).

The protein belongs to the cortexin family.

It is found in the membrane. In Danio rerio (Zebrafish), this protein is Cortexin-2 (ctxn2).